The chain runs to 357 residues: MDFPGGSGRQQQLPPMTPLPLARQGSVYSLTFDEFQSTLGGVGKDFGSMNMDELLRSIWTAEESHAVGAATTTTATTASVAAAEHAAVGAPPVQRQGSLTLPRTLSQKTVDEVWRDMMCFGGGGASTAPAAAEPPPPAHRQQTLGEITLEEFLVRAGVVREDMSVPPVPPAPTPTAAAVPPPPPPQQQTPMLFGQSNVFPPMVPPLSLGNGLVSGAVGHGGGGAASLVSPVRPVSSNGFGKMEGGDLSSLSPSPVPYVFKGGLRGRKAPGIEKVVERRQRRMIKNRESAARSRQRKQAYMMELEAEVAKLKELNDELQKKQDEMLEQQKNEVLERMSRQVGPTAKRICLRRTLTGPW.

Positions 166–185 are disordered; sequence PPVPPAPTPTAAAVPPPPPP. The bZIP domain occupies 275-338; it reads VERRQRRMIK…KNEVLERMSR (64 aa). The tract at residues 277-296 is basic motif; that stretch reads RRQRRMIKNRESAARSRQRK. Positions 303–317 are leucine-zipper; that stretch reads LEAEVAKLKELNDEL.

It belongs to the bZIP family. ABI5 subfamily. As to expression, highly expressed in leaves.

The protein resides in the nucleus. In terms of biological role, transcriptional activator that mediates abscisic acid (ABA) signaling. Can regulate the expression of a wide spectrum of stress-related genes in response to abiotic stresses through an ABA-dependent regulation pathway. Confers ABA-dependent drought and salinity tolerance. Binds specifically to the ABA-responsive elements (ABRE) in the promoter of target genes to mediate stress-responsive ABA signaling. This Oryza sativa subsp. japonica (Rice) protein is bZIP transcription factor 23.